Here is a 780-residue protein sequence, read N- to C-terminus: MMVQRLGPISPPASQVSTACKQISPSLPRAVNAANLNRPPSDTRSVILQESLVSTTLSLTESQSALSVKQEWSQSYRAFPSLSSSHSSQNGTDLGDLLSLPPGTPVSGNSVSNSLPPYLFGMENSHSPYPSPRHSATRAHSTRSKKRALSLSPLSDGIGIDFNTIIRTSPTSLVAYINGPRASPANLSPQSEVYGHFLGVRGSCIPQSCAVASGQKGILVASGGHTLPGYGEDGTLEYERMQQLEHGGLQPGPVNNMVLQPGLPGQDGQTANMLKTERLEEFPASALDLPSALPLPLPPPQGPPPPYHAHPHLHHPELLPHTQSLSLAQTGLEEDGEMEDSGGKHCCRWIDCSALYDQQEELVRHIEKVHIDQRKGEDFTCFWTGCPRRYKPFNARYKLLIHMRVHSGEKPNKCTFEGCKKAFSRLENLKIHLRSHTGEKPYLCQHPGCQKAFSNSSDRAKHQRTHLDTKPYACQIPGCTKRYTDPSSLRKHVKAHSSREQQARKKLRSSTELHPDLLTDCLAVQPLQPATSPGDAADHTVGHSPGPGPGPGPGAELYSAPIFASNHSTRSGTAAGAGPPPHPVSHPSPGHNVQGSPHNPSSQLPPLTAVDAGAERFAPPTPSPHHISPGRVPAPPSLLQRAQAPHSQQPPGSLLKPYQPETNSSFQPNGIHVHGFYGQLQTFCPPHYPDSQRTVPPSGSCSMVPSFEDCLVPTSMGQAGFDVFHRAFSTHSGITVYDLPSASSSLFGESLRSGPEDPTFLQLSAVDRCPSQLSSVYTEG.

Composition is skewed to polar residues over residues 80–92 (PSLS…QNGT) and 106–115 (VSGNSVSNSL). 2 disordered regions span residues 80 to 148 (PSLS…KKRA) and 290 to 315 (PSAL…HLHH). The segment covering 135–148 (SATRAHSTRSKKRA) has biased composition (basic residues). Residues 293–308 (LPLPLPPPQGPPPPYH) show a composition bias toward pro residues. The segment at 345 to 370 (HCCRWIDCSALYDQQEELVRHIEKVH) adopts a C2H2-type 1 zinc-finger fold. A C2H2-type 2; atypical zinc finger spans residues 379-406 (FTCFWTGCPRRYKPFNARYKLLIHMRVH). C2H2-type zinc fingers lie at residues 412 to 436 (NKCT…LRSH), 442 to 466 (YLCQ…QRTH), and 472 to 496 (YACQ…VKAH). Disordered stretches follow at residues 485-512 (DPSS…SSTE) and 527-670 (LQPA…QPNG). The short motif at 490–506 (RKHVKAHSSREQQARKK) is the Bipartite nuclear localization signal element. The segment covering 497 to 512 (SSREQQARKKLRSSTE) has biased composition (basic and acidic residues). The span at 567–577 (HSTRSGTAAGA) shows a compositional bias: low complexity. The span at 593–605 (VQGSPHNPSSQLP) shows a compositional bias: polar residues.

Belongs to the GLI C2H2-type zinc-finger protein family. In terms of tissue distribution, in the embryo, expressed at high levels in the kidney and testis. In the adult, expressed at high levels in the kidney and uterus and at lower levels in the brain, lung, skeletal muscle and pancreas.

It is found in the nucleus. Functionally, acts both as a repressor and activator of transcription. Binds to the consensus sequence 5'-GACCACCCAC-3'. The protein is Zinc finger protein GLIS3 of Mus musculus (Mouse).